The sequence spans 1001 residues: Receptor-type tyrosine-protein phosphatase N2 (1001 aa).

The N-terminal stretch at 1–27 (MGPPLPLLLLLLLPPPLPRALPAPASA) is a signal peptide. Residues 1 to 407 (MGPPLPLLLL…PEGPLLEKSS (407 aa)) form an involved in localization to secretory granules; interaction with CPE region. Topologically, residues 28 to 600 (RGRQLPGRLG…HQEEQEDSTK (573 aa)) are extracellular. Omega-N-methylarginine is present on arginine 259. 3 disordered regions span residues 271–296 (PFSA…SMDD), 308–359 (QQNS…DAPE), and 394–459 (SPLL…LEDQ). Residues 312 to 325 (EVDRLGPLKEEKAD) are compositionally biased toward basic and acidic residues. At serine 339 the chain carries Phosphoserine. Positions 340-355 (QESHGRGAEGQPREQT) are enriched in basic and acidic residues. Over residues 394–404 (SPLLPEGPLLE) the composition is skewed to low complexity. Positions 405 to 416 (KSSREEIKKSEQ) are enriched in basic and acidic residues. The span at 417-428 (PEEVLSSEEETA) shows a compositional bias: acidic residues. Residues serine 422 and serine 423 each carry the phosphoserine modification. Over residues 429 to 459 (GVEHVRSRTYSKDLFERKPNSEPQPRRLEDQ) the composition is skewed to basic and acidic residues. Residue asparagine 550 is glycosylated (N-linked (GlcNAc...) asparagine). The chain crosses the membrane as a helical span at residues 601 to 621 (FILLTFLSIACILGVLLASSL). Topologically, residues 622–1001 (AYCLRHNSHY…VNAILKALPQ (380 aa)) are cytoplasmic. The short motif at 652–661 (YQELCRQRMA) is the Tyrosine-based internalization motif element. The tract at residues 663 to 705 (RPQDRSEGPHTSRINSVSSQFSDGPMPSPSARSSTSSWSEEPV) is disordered. Residues 674-684 (SRINSVSSQFS) are compositionally biased toward polar residues. Serine 678 and serine 684 each carry phosphoserine. The span at 691-705 (PSARSSTSSWSEEPV) shows a compositional bias: low complexity. Phosphothreonine is present on threonine 697. The 261-residue stretch at 731-991 (LEKEWEALCA…EFALTAVAEE (261 aa)) folds into the Tyrosine-protein phosphatase domain. Substrate contacts are provided by residues aspartate 899 and 931-937 (CSDGAGR). Cysteine 931 acts as the Phosphocysteine intermediate in catalysis. Lysine 956 carries the post-translational modification N6-acetyllysine. Glutamine 976 contacts substrate. The Leucine-based sorting signal motif lies at 990-996 (EEVNAIL).

Belongs to the protein-tyrosine phosphatase family. As to quaternary structure, self-associates. Interacts (via cytoplasmic domain) with PTPRN (via cytoplasmic domain). Interacts (precursor form) with CPE. Interacts with HAP1 isoform A. Interacts with AP2A1 or AP2A2 and AP1G1; indicative for an association with adaptor protein complex 2 (AP-2) and adaptor protein complex 1 (AP-1). Interacts with AP2M1; indicative for an association with adaptor protein complex 2 (AP-2). Interacts with MYO5A. Subject to proteolytic cleavage at multiple sites during maturation of secretory granules. In the brain at least IA-2beta71, IA-2beta64 and IA-2beta60 have been detected, in the pancreas and a pancreatic beta cell line only IA-2beta60 has been detected. In terms of tissue distribution, detected in brain. Detected in pancreas islets (at protein level). Detected in pancreas and brain.

It is found in the cytoplasmic vesicle. It localises to the secretory vesicle membrane. Its subcellular location is the secretory vesicle. The protein localises to the synaptic vesicle membrane. The catalysed reaction is O-phospho-L-tyrosyl-[protein] + H2O = L-tyrosyl-[protein] + phosphate. Its function is as follows. Plays a role in vesicle-mediated secretory processes. Required for normal accumulation of secretory vesicles in hippocampus, pituitary and pancreatic islets. Required for the accumulation of normal levels of insulin-containing vesicles and preventing their degradation. Plays a role in insulin secretion in response to glucose stimuli. Required for normal accumulation of the neurotransmitters norepinephrine, dopamine and serotonin in the brain. In females, but not in males, required for normal accumulation and secretion of pituitary hormones, such as luteinizing hormone (LH) and follicle-stimulating hormone (FSH). Required to maintain normal levels of renin expression and renin release. May regulate catalytic active protein-tyrosine phosphatases such as PTPRA through dimerization. Has phosphatidylinositol phosphatase activity; the PIPase activity is involved in its ability to regulate insulin secretion. Can dephosphorylate phosphatidylinositol 4,5-biphosphate (PI(4,5)P2), phosphatidylinositol 5-phosphate and phosphatidylinositol 3-phosphate. Regulates PI(4,5)P2 level in the plasma membrane and localization of cofilin at the plasma membrane and thus is indirectly involved in regulation of actin dynamics related to cell migration and metastasis; upon hydrolysis of PI(4,5)P2 cofilin is released from the plasma membrane and acts in the cytoplasm in severing F-actin filaments. This Mus musculus (Mouse) protein is Receptor-type tyrosine-protein phosphatase N2 (Ptprn2).